Consider the following 436-residue polypeptide: UDP-N-acetylglucosamine 1-carboxyvinyltransferase (436 aa).

22–23 (KN) contributes to the phosphoenolpyruvate binding site. Arg-96 serves as a coordination point for UDP-N-acetyl-alpha-D-glucosamine. Cys-120 serves as the catalytic Proton donor. Cys-120 carries the post-translational modification 2-(S-cysteinyl)pyruvic acid O-phosphothioketal. Residues 125-129 (RPIDL), Asp-309, and Ile-331 contribute to the UDP-N-acetyl-alpha-D-glucosamine site.

Belongs to the EPSP synthase family. MurA subfamily.

The protein localises to the cytoplasm. It catalyses the reaction phosphoenolpyruvate + UDP-N-acetyl-alpha-D-glucosamine = UDP-N-acetyl-3-O-(1-carboxyvinyl)-alpha-D-glucosamine + phosphate. Its pathway is cell wall biogenesis; peptidoglycan biosynthesis. Cell wall formation. Adds enolpyruvyl to UDP-N-acetylglucosamine. This is UDP-N-acetylglucosamine 1-carboxyvinyltransferase from Acidobacterium capsulatum (strain ATCC 51196 / DSM 11244 / BCRC 80197 / JCM 7670 / NBRC 15755 / NCIMB 13165 / 161).